The following is a 300-amino-acid chain: Ribosomal protein bS6--L-glutamate ligase (300 aa).

The region spanning 104-287 is the ATP-grasp domain; the sequence is MQLLARQGID…IAGKMIRWIE (184 aa). ATP contacts are provided by residues Lys-141, 178 to 179, Asp-187, and 211 to 213; these read EY and RSN. The Mg(2+) site is built by Asp-248, Glu-260, and Asn-262. Asp-248, Glu-260, and Asn-262 together coordinate Mn(2+).

Belongs to the RimK family. Mg(2+) serves as cofactor. It depends on Mn(2+) as a cofactor.

Functionally, an L-glutamate ligase that catalyzes the ATP-dependent post-translational addition of glutamate residues to the C-terminus of ribosomal protein bS6 (RpsF). Is also able to catalyze the synthesis of poly-alpha-glutamate in vitro, via ATP hydrolysis from unprotected glutamate as substrate. The number of glutamate residues added to either RpsF or to poly-alpha-glutamate changes with pH. In Escherichia coli O139:H28 (strain E24377A / ETEC), this protein is Ribosomal protein bS6--L-glutamate ligase.